A 191-amino-acid polypeptide reads, in one-letter code: Protein Ves (191 aa).

Belongs to the Ves family.

The chain is Protein Ves from Escherichia coli (strain K12 / MC4100 / BW2952).